The following is a 471-amino-acid chain: 5-hydroxytryptamine receptor 2A (471 aa).

The Extracellular segment spans residues 1–80 (MEILCEDNIS…LQEKNWSALL (80 aa)). Residues N8, N38, N44, N51, and N54 are each glycosylated (N-linked (GlcNAc...) asparagine). The chain crosses the membrane as a helical span at residues 81–97 (TTVVIILTIAGNILVIM). At 98–111 (AVSLEKKLQNATNY) the chain is on the cytoplasmic side. Residues 112–137 (FLMSLAIADMLLGFLVMPVSMLTILY) traverse the membrane as a helical segment. Topologically, residues 138 to 146 (GYRWPLPSK) are extracellular. Residues 147–171 (LCAVWIYLDVLFSTASIMHLCAISL) traverse the membrane as a helical segment. A disulfide bond links C148 and C227. D155 is a serotonin binding site. Positions 172–174 (DRY) match the DRY motif; important for ligand-induced conformation changes motif. At 172 to 191 (DRYVAIQNPIHHSRFNSRTK) the chain is on the cytoplasmic side. The helical transmembrane segment at 192–215 (AFLKIIAVWTISVGISMPIPVFGL) threads the bilayer. Over 216–232 (QDDSKVFKEGSCLLADD) the chain is Extracellular. The chain crosses the membrane as a helical span at residues 233–258 (NFVLIGSFVAFFIPLTIMVITYFLTI). Residues 259–322 (KSLQKEATLC…QSISNEQKAC (64 aa)) lie on the Cytoplasmic side of the membrane. Residue S280 is modified to Phosphoserine. The helical transmembrane segment at 323-348 (KVLGIVFFLFVVMWCPFFITNIMAVI) threads the bilayer. N343 contributes to the serotonin binding site. C349 and C353 are disulfide-bonded. Residues 349 to 356 (CKESCNEN) lie on the Extracellular side of the membrane. The chain crosses the membrane as a helical span at residues 357–382 (VIGALLNVFVWIGYLSSAVNPLVYTL). Positions 376 to 380 (NPLVY) match the NPxxY motif; important for ligand-induced conformation changes and signaling motif. Residues 383–471 (FNKTYRSAFS…ETVNEKVSCV (89 aa)) are Cytoplasmic-facing. A PDZ-binding motif is present at residues 469 to 471 (SCV).

This sequence belongs to the G-protein coupled receptor 1 family. In terms of assembly, interacts (via C-terminus) with MPDZ and PATJ. May interact (via C-terminus) with MPP3, PRDX6, DLG4, DLG1, CASK, APBA1 and MAGI2. Interacts with GRM2 and DRD2; this may affect signaling. In terms of tissue distribution, detected in neurons in brain cortex. Detected in adult intestine, especially in mucosal epithelium, longitudinal and circular layers of muscularis externa and myenteric plexuses. Highly expressed in Paneth cells, and detected at lower levels in enterocytes (at protein level). Detected in neurons in the brain cortex.

The protein localises to the cell membrane. It localises to the cell projection. Its subcellular location is the dendrite. The protein resides in the axon. It is found in the cytoplasmic vesicle. The protein localises to the membrane. It localises to the caveola. Its subcellular location is the presynapse. With respect to regulation, G-protein coupled receptor activity is regulated by lipids: oleamide increases HTR2A-mediated activity. Its function is as follows. G-protein coupled receptor for 5-hydroxytryptamine (serotonin). Also functions as a receptor for various drugs and psychoactive substances, including mescaline, psilocybin, 1-(2,5-dimethoxy-4-iodophenyl)-2-aminopropane (DOI) and lysergic acid diethylamide (LSD). Ligand binding causes a conformation change that triggers signaling via guanine nucleotide-binding proteins (G proteins) and modulates the activity of downstream effectors. HTR2A is coupled to G(q)/G(11) G alpha proteins and activates phospholipase C-beta, releasing diacylglycerol (DAG) and inositol 1,4,5-trisphosphate (IP3) second messengers that modulate the activity of phosphatidylinositol 3-kinase and promote the release of Ca(2+) ions from intracellular stores, respectively. Beta-arrestin family members inhibit signaling via G proteins and mediate activation of alternative signaling pathways. Affects neural activity, perception, cognition and mood. Plays a role in the regulation of behavior, including responses to anxiogenic situations and psychoactive substances. Plays a role in intestinal smooth muscle contraction, and may play a role in arterial vasoconstriction. The polypeptide is 5-hydroxytryptamine receptor 2A (Htr2a) (Mus musculus (Mouse)).